Consider the following 417-residue polypeptide: Voltage-gated potassium channel Kch (417 aa).

At 1-21 (MSHWATFKQTATNLWVTLRHD) the chain is on the cytoplasmic side. A helical transmembrane segment spans residues 22–41 (ILALAVFLNGLLIFKTIYGM). At 42–63 (SVNLLDIFHIKAFSELDLSLLA) the chain is on the periplasmic side. A helical transmembrane segment spans residues 64 to 83 (NAPLFMLGVFLVLNSIGLLF). At 84–86 (RAK) the chain is on the cytoplasmic side. A helical transmembrane segment spans residues 87-104 (LAWAISIILLLIALIYTL). The Periplasmic portion of the chain corresponds to 105 to 110 (HFYPWL). Residues 111-127 (KFSIGFCIFTLVFLLIL) form a helical membrane-spanning segment. At 128–140 (RKDFSHSSAAAGT) the chain is on the cytoplasmic side. A helical transmembrane segment spans residues 141-160 (IFAFISFTTLLFYSTYGALY). Topologically, residues 161–199 (LSEGFNPRIESLMTAFYFSIETMSTVGYGDIVPVSESAR) are periplasmic. Residues 185–190 (TVGYGD) carry the Selectivity filter motif. Residues 200-220 (LFTISVIISGITVFATSMTSI) form a helical membrane-spanning segment. The Cytoplasmic portion of the chain corresponds to 221–417 (FGPLIRGGFN…KADSKESAQK (197 aa)). In terms of domain architecture, RCK N-terminal spans 243–363 (KDHFIVCGHS…IKMVHPDIIL (121 aa)).

The protein belongs to the potassium channel family. Dimer.

It localises to the cell inner membrane. K(+)-specific ion channel. May play a role in the defense against osmotic shock. The sequence is that of Voltage-gated potassium channel Kch (kch) from Escherichia coli (strain K12).